Here is a 185-residue protein sequence, read N- to C-terminus: Large ribosomal subunit protein uL5 (185 aa).

This sequence belongs to the universal ribosomal protein uL5 family. As to quaternary structure, part of the 50S ribosomal subunit; part of the 5S rRNA/L5/L18/L25 subcomplex. Contacts the 5S rRNA and the P site tRNA. Forms a bridge to the 30S subunit in the 70S ribosome.

This is one of the proteins that bind and probably mediate the attachment of the 5S RNA into the large ribosomal subunit, where it forms part of the central protuberance. In the 70S ribosome it contacts protein S13 of the 30S subunit (bridge B1b), connecting the 2 subunits; this bridge is implicated in subunit movement. Contacts the P site tRNA; the 5S rRNA and some of its associated proteins might help stabilize positioning of ribosome-bound tRNAs. This is Large ribosomal subunit protein uL5 from Magnetococcus marinus (strain ATCC BAA-1437 / JCM 17883 / MC-1).